A 236-amino-acid polypeptide reads, in one-letter code: 2-C-methyl-D-erythritol 4-phosphate cytidylyltransferase (236 aa).

Belongs to the IspD/TarI cytidylyltransferase family. IspD subfamily.

It catalyses the reaction 2-C-methyl-D-erythritol 4-phosphate + CTP + H(+) = 4-CDP-2-C-methyl-D-erythritol + diphosphate. Its pathway is isoprenoid biosynthesis; isopentenyl diphosphate biosynthesis via DXP pathway; isopentenyl diphosphate from 1-deoxy-D-xylulose 5-phosphate: step 2/6. Its function is as follows. Catalyzes the formation of 4-diphosphocytidyl-2-C-methyl-D-erythritol from CTP and 2-C-methyl-D-erythritol 4-phosphate (MEP). The polypeptide is 2-C-methyl-D-erythritol 4-phosphate cytidylyltransferase (Burkholderia vietnamiensis (strain G4 / LMG 22486) (Burkholderia cepacia (strain R1808))).